Reading from the N-terminus, the 188-residue chain is Translation machinery-associated protein 22 (188 aa).

In terms of domain architecture, SUI1 spans 96–167; sequence VTIKRIERNK…EIEEFLLEKY (72 aa).

Belongs to the DENR family. Interacts with the 40S ribosomal subunit.

The protein localises to the cytoplasm. This is Translation machinery-associated protein 22 (TMA22) from Chaetomium globosum (strain ATCC 6205 / CBS 148.51 / DSM 1962 / NBRC 6347 / NRRL 1970) (Soil fungus).